Consider the following 223-residue polypeptide: Urease accessory protein UreF (223 aa).

It belongs to the UreF family. As to quaternary structure, ureD, UreF and UreG form a complex that acts as a GTP-hydrolysis-dependent molecular chaperone, activating the urease apoprotein by helping to assemble the nickel containing metallocenter of UreC. The UreE protein probably delivers the nickel.

Its subcellular location is the cytoplasm. In terms of biological role, required for maturation of urease via the functional incorporation of the urease nickel metallocenter. The sequence is that of Urease accessory protein UreF from Paenarthrobacter aurescens (strain TC1).